We begin with the raw amino-acid sequence, 330 residues long: tRNA N6-adenosine threonylcarbamoyltransferase (330 aa).

Histidine 110 and histidine 114 together coordinate Fe cation. Residues 133–137 (LVSGG), aspartate 166, glycine 179, and asparagine 268 contribute to the substrate site. Residue aspartate 296 coordinates Fe cation.

It belongs to the KAE1 / TsaD family. Fe(2+) serves as cofactor.

The protein resides in the cytoplasm. It catalyses the reaction L-threonylcarbamoyladenylate + adenosine(37) in tRNA = N(6)-L-threonylcarbamoyladenosine(37) in tRNA + AMP + H(+). Its function is as follows. Required for the formation of a threonylcarbamoyl group on adenosine at position 37 (t(6)A37) in tRNAs that read codons beginning with adenine. Is involved in the transfer of the threonylcarbamoyl moiety of threonylcarbamoyl-AMP (TC-AMP) to the N6 group of A37, together with TsaE and TsaB. TsaD likely plays a direct catalytic role in this reaction. This Kosmotoga olearia (strain ATCC BAA-1733 / DSM 21960 / TBF 19.5.1) protein is tRNA N6-adenosine threonylcarbamoyltransferase.